The sequence spans 549 residues: Membrane protein insertase YidC (549 aa).

Residues N6–D26 form a helical membrane-spanning segment. The segment at A35–A55 is disordered. A run of 4 helical transmembrane segments spans residues Q349–V369, L424–L444, L462–I482, and P503–V523.

This sequence belongs to the OXA1/ALB3/YidC family. Type 1 subfamily. In terms of assembly, interacts with the Sec translocase complex via SecD. Specifically interacts with transmembrane segments of nascent integral membrane proteins during membrane integration.

Its subcellular location is the cell inner membrane. Its function is as follows. Required for the insertion and/or proper folding and/or complex formation of integral membrane proteins into the membrane. Involved in integration of membrane proteins that insert both dependently and independently of the Sec translocase complex, as well as at least some lipoproteins. Aids folding of multispanning membrane proteins. The protein is Membrane protein insertase YidC of Tolumonas auensis (strain DSM 9187 / NBRC 110442 / TA 4).